The primary structure comprises 416 residues: Thyroid hormone receptor alpha-A (416 aa).

Positions 1-13 (MEPMSNKQDSNSS) are enriched in polar residues. Residues 1–37 (MEPMSNKQDSNSSEGDEKGWPDVPKRKRKNSQCSMKS) form a disordered region. The modulating stretch occupies residues 1-58 (MEPMSNKQDSNSSEGDEKGWPDVPKRKRKNSQCSMKSMSALSVSVPGYIPSYLEKDEP). The segment covering 15–24 (GDEKGWPDVP) has biased composition (basic and acidic residues). 2 consecutive NR C4-type zinc fingers follow at residues 59 to 79 (CVVC…CEGC) and 97 to 121 (CKYE…FKKC). The segment at residues 59–126 (CVVCGDKATG…RFKKCISVGM (68 aa)) is a DNA-binding region (nuclear receptor). One can recognise an NR LBD domain in the interval 169-413 (AEWELIRMAT…PPLFLEVFED (245 aa)).

The protein belongs to the nuclear hormone receptor family. NR1 subfamily.

The protein resides in the nucleus. Its function is as follows. High affinity receptor for triiodothyronine. The polypeptide is Thyroid hormone receptor alpha-A (thra1) (Paralichthys olivaceus (Bastard halibut)).